Here is a 251-residue protein sequence, read N- to C-terminus: ATP synthase subunit a (251 aa).

5 consecutive transmembrane segments (helical) span residues 34–54 (VFLTSWFVIGVLVLASVAASS), 93–113 (FVGTLFLFIFVSNWSGALVPF), 130–150 (INTTVALALLTSLAYFYAGFS), 195–215 (LVVGVLVLLVPLFVPLPVMAL), and 216–236 (GLFTSAIQALIFATLAAAYIG).

Belongs to the ATPase A chain family. In terms of assembly, F-type ATPases have 2 components, CF(1) - the catalytic core - and CF(0) - the membrane proton channel. CF(1) has five subunits: alpha(3), beta(3), gamma(1), delta(1), epsilon(1). CF(0) has four main subunits: a, b, b' and c.

The protein localises to the cellular thylakoid membrane. Functionally, key component of the proton channel; it plays a direct role in the translocation of protons across the membrane. The protein is ATP synthase subunit a of Trichormus variabilis (strain ATCC 29413 / PCC 7937) (Anabaena variabilis).